The primary structure comprises 255 residues: Cell division protein DivIB (255 aa).

The Cytoplasmic segment spans residues 1 to 30 (MKNSKVIKLQDRVPKLKNQKKRNKPPVNHR). The chain crosses the membrane as a helical span at residues 31–51 (LILYISILFLLVLFLIYFRSP). The Extracellular segment spans residues 52–255 (LSNIKKISVF…FKYLDDEKKK (204 aa)). One can recognise a POTRA domain in the interval 53–121 (SNIKKISVFG…NKIDIHIEEY (69 aa)).

Belongs to the FtsQ/DivIB family. DivIB subfamily.

Its subcellular location is the cell membrane. Cell division protein that may be involved in stabilizing or promoting the assembly of the division complex. In Bacillus cytotoxicus (strain DSM 22905 / CIP 110041 / 391-98 / NVH 391-98), this protein is Cell division protein DivIB.